The primary structure comprises 337 residues: Monoacylglycerol lipase ABHD6 (337 aa).

Residues 1–19 (MDLDVVNMFVIAGGTLALP) are Extracellular-facing. Residues 20–42 (ILAFVASFLLWPSALIRIYYWYW) traverse the membrane as a helical; Signal-anchor for type II membrane protein segment. The Cytoplasmic portion of the chain corresponds to 43–337 (RRTLGMQVRY…HSTDNSKKLD (295 aa)). The AB hydrolase-1 domain occupies 72-313 (PSILMLHGFS…CGHSVVMERP (242 aa)). Residue Ser-148 is the Nucleophile of the active site. Active-site charge relay system residues include Asp-278 and His-306.

The protein belongs to the AB hydrolase superfamily.

It localises to the late endosome membrane. The protein resides in the lysosome membrane. Its subcellular location is the mitochondrion membrane. The enzyme catalyses Hydrolyzes glycerol monoesters of long-chain fatty acids.. It carries out the reaction 1-octanoylglycerol + H2O = octanoate + glycerol + H(+). It catalyses the reaction 1-decanoylglycerol + H2O = decanoate + glycerol + H(+). The catalysed reaction is 1-dodecanoylglycerol + H2O = dodecanoate + glycerol + H(+). The enzyme catalyses 1-tetradecanoylglycerol + H2O = tetradecanoate + glycerol + H(+). It carries out the reaction 2-hexadecanoylglycerol + H2O = glycerol + hexadecanoate + H(+). It catalyses the reaction 2-(9Z-octadecenoyl)-glycerol + H2O = glycerol + (9Z)-octadecenoate + H(+). The catalysed reaction is 1-(9Z-octadecenoyl)-glycerol + H2O = glycerol + (9Z)-octadecenoate + H(+). The enzyme catalyses 2-(9Z,12Z-octadecadienoyl)-glycerol + H2O = (9Z,12Z)-octadecadienoate + glycerol + H(+). It carries out the reaction 2-(5Z,8Z,11Z,14Z-eicosatetraenoyl)-glycerol + H2O = glycerol + (5Z,8Z,11Z,14Z)-eicosatetraenoate + H(+). It catalyses the reaction 1-(5Z,8Z,11Z,14Z-eicosatetraenoyl)-glycerol + H2O = glycerol + (5Z,8Z,11Z,14Z)-eicosatetraenoate + H(+). The catalysed reaction is 1-(9Z,12Z-octadecadienoyl)-glycerol + H2O = (9Z,12Z)-octadecadienoate + glycerol + H(+). The enzyme catalyses 3-(9Z-octadecenoyl)-sn-glycero-1-phospho-(3'-(9Z-octadecenoyl)-1'-sn-glycerol) + H2O = 3-(9Z-octadecenoyl)-sn-glycero-1-phospho-(1'-sn-glycerol) + (9Z)-octadecenoate + H(+). It carries out the reaction (S,S)-2-(9Z-octadecenoyl)-sn-glycero-1-phospho-(2'-(9Z-octadecenoyl)-1'-sn-glycerol) + H2O = (S,S)-2-(9Z-octadecenoyl)-sn-glycero-1-phospho-(1'-sn-glycerol) + (9Z)-octadecenoate + H(+). It catalyses the reaction (R,R)-2-(9Z-octadecenoyl)-sn-glycero-3-phospho-(2'-(9Z-octadecenoyl)-3'-sn-glycerol) + H2O = (R,R)-2-(9Z-octadecenoyl)-sn-glycero-3-phospho-(3'-sn-glycerol) + (9Z)-octadecenoate + H(+). In terms of biological role, lipase that preferentially hydrolysis medium-chain saturated monoacylglycerols including 2-arachidonoylglycerol. Through 2-arachidonoylglycerol degradation may regulate endocannabinoid signaling pathways. Also has a lysophosphatidyl lipase activity with a preference for lysophosphatidylglycerol among other lysophospholipids. Also able to degrade bis(monoacylglycero)phosphate (BMP) and constitutes the major enzyme for BMP catabolism. BMP, also known as lysobisphosphatidic acid, is enriched in late endosomes and lysosomes and plays a key role in the formation of intraluminal vesicles and in lipid sorting. In Bos taurus (Bovine), this protein is Monoacylglycerol lipase ABHD6.